The sequence spans 569 residues: MVAIKEMKEFAFARPSLVETLNKKKKFLKKKEKRTFVLSIYAFITFIIFCIGILYFTNKSSAHNNNNNKNEHSLKKEEIELLRVLLEKYKKQKDGILNESSNEEDEEKYTLNSETYNNKNNVSNIKNDSIKSKKEEYINLERILLEKYKKFINENNEENRKELSNILHKLLEINKLILREEKDDKKVYLINDNYDEKGALEIGMNEEMKYKKEDPINNIKYASKFFKFMKEHNKVYKNIDEQMRKFEIFKINYISIKNHNKLNKNAMYKKKVNQFSDYSEEELKEYFKTLLHVPNHMIEKYSKPFENHLKDNILISEFYTNGKRNEKDIFSKVPEILDYREKGIVHEPKDQGLCGSCWAFASVGNIESVFAKKNKNILSFSEQEVVDCSKDNFGCDGGHPFYSFLYVLQNELCLGDEYKYKAKDDMFCLNYRCKRKVSLSSIGAVKENQLILALNEVGPLSVNVGVNNDFVAYSEGVYNGTCSEELNHSVLLVGYGQVEKTKLNYNNKIQTYNTKENSNQPDDNIIYYWIIKNSWSKKWGENGFMRLSRNKNGDNVFCGIGEEVFYPIL.

Topologically, residues 1–35 (MVAIKEMKEFAFARPSLVETLNKKKKFLKKKEKRT) are cytoplasmic. The propeptide at 1–332 (MVAIKEMKEF…KRNEKDIFSK (332 aa)) is activation peptide. The chain crosses the membrane as a helical; Signal-anchor for type II membrane protein span at residues 36–56 (FVLSIYAFITFIIFCIGILYF). Topologically, residues 57–569 (TNKSSAHNNN…IGEEVFYPIL (513 aa)) are lumenal. 4 N-linked (GlcNAc...) asparagine glycosylation sites follow: N58, N98, N121, and N127. The segment at 97 to 118 (LNESSNEEDEEKYTLNSETYNN) is disordered. Intrachain disulfides connect C354–C395, C388–C428, and C413–C433. Residue C357 is part of the active site. Residues N479 and N487 are each glycosylated (N-linked (GlcNAc...) asparagine). Cysteines 482 and 558 form a disulfide. Catalysis depends on residues H488 and N533.

The protein belongs to the peptidase C1 family. In terms of processing, contains disulfide bonds.

The protein localises to the membrane. It is found in the cytoplasmic granule. Functionally, cysteine protease. In the mosquito midgut, required for parasite development. The polypeptide is Falcipain-1 (Plasmodium falciparum (isolate 3D7)).